A 911-amino-acid polypeptide reads, in one-letter code: DNA replication licensing factor mcm4 (911 aa).

Residues 1–132 (MSSSQQSGRA…RPGVSTPSSL (132 aa)) form a disordered region. Residues Ser37, Ser38, and Ser41 each carry the phosphoserine modification. Positions 42 to 56 (TRLTTPRTTARTPLA) are enriched in low complexity. Positions 63-84 (ESSSPGPNIPQSSRSHLLSQRN) are enriched in polar residues. A Phosphoserine modification is found at Ser92. One can recognise an MCM domain in the interval 493-702 (IYDILSRSLA…LDRKLANHIV (210 aa)). 545-552 (GDPSTSKS) is a binding site for ATP. An Arginine finger motif is present at residues 677–680 (SRFD).

This sequence belongs to the MCM family. Component of the mcm2-7 complex. The complex forms a toroidal hexameric ring with the proposed subunit order mcm2-mcm6-mcm4-mcm7-mcm3-mcm5. The heterodimers of mcm4/mcm6 and mcm3/mcm5 interact with mcm2 and mcm7.

It is found in the nucleus. The enzyme catalyses ATP + H2O = ADP + phosphate + H(+). Acts as a component of the mcm2-7 complex (mcm complex) which is the putative replicative helicase essential for 'once per cell cycle' DNA replication initiation and elongation in eukaryotic cells. The active ATPase sites in the mcm2-7 ring are formed through the interaction surfaces of two neighboring subunits such that a critical structure of a conserved arginine finger motif is provided in trans relative to the ATP-binding site of the Walker A box of the adjacent subunit. The six ATPase active sites, however, are likely to contribute differentially to the complex helicase activity. Required for S phase execution. The sequence is that of DNA replication licensing factor mcm4 (mcm4) from Schizosaccharomyces pombe (strain 972 / ATCC 24843) (Fission yeast).